Reading from the N-terminus, the 419-residue chain is UDP-N-acetylglucosamine 1-carboxyvinyltransferase (419 aa).

22-23 (KN) is a phosphoenolpyruvate binding site. Position 93 (R93) interacts with UDP-N-acetyl-alpha-D-glucosamine. Residue C117 is the Proton donor of the active site. Residue C117 is modified to 2-(S-cysteinyl)pyruvic acid O-phosphothioketal. Residues D306 and I328 each coordinate UDP-N-acetyl-alpha-D-glucosamine.

The protein belongs to the EPSP synthase family. MurA subfamily.

The protein localises to the cytoplasm. It carries out the reaction phosphoenolpyruvate + UDP-N-acetyl-alpha-D-glucosamine = UDP-N-acetyl-3-O-(1-carboxyvinyl)-alpha-D-glucosamine + phosphate. It functions in the pathway cell wall biogenesis; peptidoglycan biosynthesis. Its function is as follows. Cell wall formation. Adds enolpyruvyl to UDP-N-acetylglucosamine. This Idiomarina loihiensis (strain ATCC BAA-735 / DSM 15497 / L2-TR) protein is UDP-N-acetylglucosamine 1-carboxyvinyltransferase.